Here is a 245-residue protein sequence, read N- to C-terminus: tRNA (guanine-N(1)-)-methyltransferase (245 aa).

Residues Gly-111 and 131–136 contribute to the S-adenosyl-L-methionine site; that span reads MGDYVL.

This sequence belongs to the RNA methyltransferase TrmD family. In terms of assembly, homodimer.

The protein resides in the cytoplasm. It carries out the reaction guanosine(37) in tRNA + S-adenosyl-L-methionine = N(1)-methylguanosine(37) in tRNA + S-adenosyl-L-homocysteine + H(+). In terms of biological role, specifically methylates guanosine-37 in various tRNAs. The protein is tRNA (guanine-N(1)-)-methyltransferase of Staphylococcus aureus (strain Mu3 / ATCC 700698).